Reading from the N-terminus, the 520-residue chain is Serine/threonine-protein kinases drp72 (520 aa).

Residues 20 to 281 (YTLQWIVGHG…NELARAVSAV (262 aa)) enclose the Protein kinase domain. Residues 26–34 (VGHGGMSTV) and Lys49 each bind ATP. Asp148 acts as the Proton acceptor in catalysis. Disordered stretches follow at residues 315-334 (ARPT…RQEK) and 366-504 (SGDS…DAAD). Low complexity predominate over residues 374 to 394 (TPETITQTVTPTETTTSEEPT). The span at 395 to 411 (LAPPPVQPTRQPVPTPD) shows a compositional bias: pro residues. Residues 416-429 (RLPTTTQESPTRVS) are compositionally biased toward polar residues. Residues 440–449 (EQTTPGGQPP) are compositionally biased toward low complexity. Polar residues predominate over residues 450-460 (LSTLPTSLGWQ). Residues 469-484 (QGNPNTTGNPANPGTP) are compositionally biased toward low complexity. The span at 485-496 (GTTGGNGTGNAG) shows a compositional bias: gly residues.

It belongs to the protein kinase superfamily. Ser/Thr protein kinase family.

It carries out the reaction L-seryl-[protein] + ATP = O-phospho-L-seryl-[protein] + ADP + H(+). The catalysed reaction is L-threonyl-[protein] + ATP = O-phospho-L-threonyl-[protein] + ADP + H(+). This chain is Serine/threonine-protein kinases drp72, found in Corynebacterium efficiens (strain DSM 44549 / YS-314 / AJ 12310 / JCM 11189 / NBRC 100395).